We begin with the raw amino-acid sequence, 446 residues long: Tubulin beta-2 chain (446 aa).

The GTP site is built by Q11, E69, S138, G142, T143, G144, N204, and N226. E69 contributes to the Mg(2+) binding site. Positions 424–446 (QYQEATADEEGEFDEDEEGGGDE) are disordered. Over residues 429-446 (TADEEGEFDEDEEGGGDE) the composition is skewed to acidic residues.

Belongs to the tubulin family. As to quaternary structure, dimer of alpha and beta chains. A typical microtubule is a hollow water-filled tube with an outer diameter of 25 nm and an inner diameter of 15 nM. Alpha-beta heterodimers associate head-to-tail to form protofilaments running lengthwise along the microtubule wall with the beta-tubulin subunit facing the microtubule plus end conferring a structural polarity. Microtubules usually have 13 protofilaments but different protofilament numbers can be found in some organisms and specialized cells. Mg(2+) serves as cofactor.

The protein localises to the cytoplasm. It is found in the cytoskeleton. Tubulin is the major constituent of microtubules, a cylinder consisting of laterally associated linear protofilaments composed of alpha- and beta-tubulin heterodimers. Microtubules grow by the addition of GTP-tubulin dimers to the microtubule end, where a stabilizing cap forms. Below the cap, tubulin dimers are in GDP-bound state, owing to GTPase activity of alpha-tubulin. The chain is Tubulin beta-2 chain (betaTub85D) from Drosophila erecta (Fruit fly).